The sequence spans 190 residues: Segregation and condensation protein B (190 aa).

It belongs to the ScpB family. In terms of assembly, homodimer. Homodimerization may be required to stabilize the binding of ScpA to the Smc head domains. Component of a cohesin-like complex composed of ScpA, ScpB and the Smc homodimer, in which ScpA and ScpB bind to the head domain of Smc. The presence of the three proteins is required for the association of the complex with DNA.

It is found in the cytoplasm. In terms of biological role, participates in chromosomal partition during cell division. May act via the formation of a condensin-like complex containing Smc and ScpA that pull DNA away from mid-cell into both cell halves. The protein is Segregation and condensation protein B of Bacillus thuringiensis subsp. konkukian (strain 97-27).